A 346-amino-acid chain; its full sequence is Probable electron transfer flavoprotein subunit alpha, mitochondrial (346 aa).

An FAD-binding site is contributed by Leu-285–Asp-313.

It belongs to the ETF alpha-subunit/FixB family. Heterodimer of an alpha and a beta subunit. The cofactor is FAD.

The protein localises to the mitochondrion matrix. The electron transfer flavoprotein serves as a specific electron acceptor for several dehydrogenases, including five acyl-CoA dehydrogenases, glutaryl-CoA and sarcosine dehydrogenase. It transfers the electrons to the main mitochondrial respiratory chain via ETF-ubiquinone oxidoreductase (ETF dehydrogenase). This is Probable electron transfer flavoprotein subunit alpha, mitochondrial (ETF1) from Cryptococcus gattii serotype B (strain WM276 / ATCC MYA-4071) (Filobasidiella gattii).